A 427-amino-acid chain; its full sequence is Glutamate-1-semialdehyde 2,1-aminomutase (427 aa).

At Lys265 the chain carries N6-(pyridoxal phosphate)lysine.

The protein belongs to the class-III pyridoxal-phosphate-dependent aminotransferase family. HemL subfamily. As to quaternary structure, homodimer. Pyridoxal 5'-phosphate serves as cofactor.

Its subcellular location is the cytoplasm. It catalyses the reaction (S)-4-amino-5-oxopentanoate = 5-aminolevulinate. Its pathway is porphyrin-containing compound metabolism; protoporphyrin-IX biosynthesis; 5-aminolevulinate from L-glutamyl-tRNA(Glu): step 2/2. In Burkholderia orbicola (strain MC0-3), this protein is Glutamate-1-semialdehyde 2,1-aminomutase.